The following is an 84-amino-acid chain: Cytochrome b559 subunit alpha (84 aa).

At 2 to 20 (AGTTGERPFSDIITSVRYW) the chain is on the cytoplasmic side. Residues 21–35 (VIHSITIPALFIAGW) traverse the membrane as a helical segment. A heme-binding site is contributed by His-23. The Lumenal portion of the chain corresponds to 36–84 (LFVSTGLAYDVFGTPRPDSYYAQEQRSIPLVTDRFEAKQQVETFLEQLK).

The protein belongs to the PsbE/PsbF family. Heterodimer of an alpha subunit and a beta subunit. PSII is composed of 1 copy each of membrane proteins PsbA, PsbB, PsbC, PsbD, PsbE, PsbF, PsbH, PsbI, PsbJ, PsbK, PsbL, PsbM, PsbT, PsbX, PsbY, PsbZ, Psb30/Ycf12, peripheral proteins PsbO, CyanoQ (PsbQ), PsbU, PsbV and a large number of cofactors. It forms dimeric complexes. The cofactor is heme b.

It is found in the cellular thylakoid membrane. In terms of biological role, this b-type cytochrome is tightly associated with the reaction center of photosystem II (PSII). PSII is a light-driven water:plastoquinone oxidoreductase that uses light energy to abstract electrons from H(2)O, generating O(2) and a proton gradient subsequently used for ATP formation. It consists of a core antenna complex that captures photons, and an electron transfer chain that converts photonic excitation into a charge separation. This is Cytochrome b559 subunit alpha from Thermostichus vulcanus (Synechococcus vulcanus).